Reading from the N-terminus, the 171-residue chain is 3-hydroxydecanoyl-[acyl-carrier-protein] dehydratase (171 aa).

Residue histidine 70 is part of the active site.

This sequence belongs to the thioester dehydratase family. FabA subfamily. Homodimer.

The protein localises to the cytoplasm. It catalyses the reaction a (3R)-hydroxyacyl-[ACP] = a (2E)-enoyl-[ACP] + H2O. The enzyme catalyses (3R)-hydroxydecanoyl-[ACP] = (2E)-decenoyl-[ACP] + H2O. It carries out the reaction (2E)-decenoyl-[ACP] = (3Z)-decenoyl-[ACP]. It participates in lipid metabolism; fatty acid biosynthesis. Functionally, necessary for the introduction of cis unsaturation into fatty acids. Catalyzes the dehydration of (3R)-3-hydroxydecanoyl-ACP to E-(2)-decenoyl-ACP and then its isomerization to Z-(3)-decenoyl-ACP. Can catalyze the dehydratase reaction for beta-hydroxyacyl-ACPs with saturated chain lengths up to 16:0, being most active on intermediate chain length. In Stenotrophomonas maltophilia (strain K279a), this protein is 3-hydroxydecanoyl-[acyl-carrier-protein] dehydratase.